The primary structure comprises 317 residues: Transaldolase 1 (317 aa).

Lys132 acts as the Schiff-base intermediate with substrate in catalysis.

This sequence belongs to the transaldolase family. Type 1 subfamily. In terms of assembly, homodimer.

It is found in the cytoplasm. The catalysed reaction is D-sedoheptulose 7-phosphate + D-glyceraldehyde 3-phosphate = D-erythrose 4-phosphate + beta-D-fructose 6-phosphate. The protein operates within carbohydrate degradation; pentose phosphate pathway; D-glyceraldehyde 3-phosphate and beta-D-fructose 6-phosphate from D-ribose 5-phosphate and D-xylulose 5-phosphate (non-oxidative stage): step 2/3. In terms of biological role, transaldolase is important for the balance of metabolites in the pentose-phosphate pathway. This Salmonella paratyphi A (strain ATCC 9150 / SARB42) protein is Transaldolase 1.